We begin with the raw amino-acid sequence, 62 residues long: Cuticle protein 6.4 (62 aa).

In terms of biological role, component of the cuticle of migratory locust which contains more than 100 different structural proteins. This chain is Cuticle protein 6.4, found in Locusta migratoria (Migratory locust).